Consider the following 1042-residue polypeptide: Putative type I restriction enzyme MjaIXP endonuclease subunit (1042 aa).

The Helicase ATP-binding domain occupies Gly-323–Ala-487. A DEAH box motif is present at residues Asp-439–His-442. A Helicase C-terminal domain is found at Leu-551–Lys-731.

This sequence belongs to the HsdR family. The type I restriction/modification system is composed of three polypeptides R, M and S.

It catalyses the reaction Endonucleolytic cleavage of DNA to give random double-stranded fragments with terminal 5'-phosphates, ATP is simultaneously hydrolyzed.. The restriction (R) subunit of a type I restriction enzyme that recognizes 5'-CCAN(5)GTR-3' and cleaves a random distance away. The R subunit is required for both nuclease and ATPase activities, but not for modification. After locating a non-methylated recognition site, the enzyme complex serves as a molecular motor that translocates DNA in an ATP-dependent manner until a collision occurs that triggers cleavage. The protein is Putative type I restriction enzyme MjaIXP endonuclease subunit of Methanocaldococcus jannaschii (strain ATCC 43067 / DSM 2661 / JAL-1 / JCM 10045 / NBRC 100440) (Methanococcus jannaschii).